Here is a 406-residue protein sequence, read N- to C-terminus: Ubiquitin-associated domain-containing protein 1 (406 aa).

The Ubiquitin-like domain occupies 14-98 (LRLHICSLDG…LLLVKKRAPP (85 aa)). Residues 95-122 (RAPPPTPKMAEVSADEKRKQDQKAPDKD) are disordered. Positions 108 to 122 (ADEKRKQDQKAPDKD) are enriched in basic and acidic residues. In terms of domain architecture, UBA 1 spans 186–231 (EDDEDRVDEVALRQLTEMGFPESRAVKALRLNHMSVTQAMEWLIEH). Positions 238 to 257 (DAPLPCENSSEAAGGLATGE) are enriched in low complexity. The segment at 238–272 (DAPLPCENSSEAAGGLATGEAETKPTLGAGAEDPK) is disordered. A UBA 2 domain is found at 289–329 (RPDPRAVIALMEMGFDEKEVIDALRVNNNQQDAACEWLLGD). Positions 354–393 (NPVVQLGLTNPKTLLAFEDMLENPLNSTQWMNDPETGPVM) constitute an STI1 domain.

In terms of assembly, component of the KPC complex.

The protein resides in the cytoplasm. It participates in protein modification; protein ubiquitination. In terms of biological role, non-catalytic component of the KPC complex, a E3 ubiquitin-protein ligase complex that mediates polyubiquitination of target proteins, such as CDKN1B and NFKB1. Within the KPC complex, UBAC1 acts as an adapter that promotes the transfer of target proteins that have been polyubiquitinated by RNF123/KPC1 to the 26S proteasome. The chain is Ubiquitin-associated domain-containing protein 1 (ubac1) from Xenopus tropicalis (Western clawed frog).